We begin with the raw amino-acid sequence, 362 residues long: H-2 class I histocompatibility antigen, D-K alpha chain (362 aa).

A signal peptide spans 1–24 (MGAMVPRTLLLLLAAALAPAQTRA). Positions 25 to 114 (GPHSLRYFET…LLRYYNQSEG (90 aa)) are alpha-1. The Extracellular segment spans residues 25–306 (GPHSLRYFET…RWEPPPSTDS (282 aa)). Asn-110 carries an N-linked (GlcNAc...) asparagine glycan. The alpha-2 stretch occupies residues 115–206 (GSHTIQRLSG…ELGNATLLHT (92 aa)). A disulfide bridge links Cys-125 with Cys-188. 2 N-linked (GlcNAc...) asparagine glycosylation sites follow: Asn-200 and Asn-280. Residues 207–298 (DSPKAHVTHH…GLPEPLTLRW (92 aa)) form an alpha-3 region. Residues 209–297 (PKAHVTHHPR…EGLPEPLTLR (89 aa)) form the Ig-like C1-type domain. A disulfide bridge connects residues Cys-227 and Cys-283. A connecting peptide region spans residues 299 to 306 (EPPPSTDS). A helical membrane pass occupies residues 307–333 (YMVIVAVLGVLGAVAIIGAVVAFVMMM). Topologically, residues 334–362 (RRNTGGKGGDYTLTPGSQSSEMSLPDCKA) are cytoplasmic. The segment at 340–362 (KGGDYTLTPGSQSSEMSLPDCKA) is disordered. Phosphoserine occurs at positions 353 and 356.

The protein belongs to the MHC class I family. In terms of assembly, heterodimer of an alpha chain and a beta chain (beta-2-microglobulin). Post-translationally, polyubiquitinated in case of infection by murid herpesvirus 4, by the viral E3 ligase K3 (mK3), leading to target the protein for rapid degradation by the endoplasmic reticulum-associated degradation (ERAD) system. Ubiquitination takes place on lysine, as well as serine and threonine residues present in the cytoplasmic tail. Hydroxylated serine and threonine residues in the cytoplasmic tail are subject to ubiquitination via ester bonds instead of the classical isopeptide linkage. Hydroxylation of residues in the cytoplasmic tail.

It localises to the membrane. In terms of biological role, involved in the presentation of foreign antigens to the immune system. The sequence is that of H-2 class I histocompatibility antigen, D-K alpha chain (H2-D1) from Mus musculus (Mouse).